The sequence spans 167 residues: MRLWFCLSFFIILCLEHFPGTLADERNVPESEEKTEQFLRDLSEISRLQRRPPGFSPFRGKFHSQSLRDLSEISRLQRRPPGFSPFRGKFHSQSMRDLSEISRLQRRPPGFSPFRGKFHSQSMRDLSEISRLQRRPPGFSPFRGKFHSQSLRGLSEIKRLKTTHKIH.

The first 23 residues, Met1–Ala23, serve as a signal peptide directing secretion.

It belongs to the bradykinin-related peptide family. In terms of tissue distribution, expressed by the skin glands.

It is found in the secreted. In terms of biological role, vasodilator. Bradykinin produces in vitro relaxation of rat arterial smooth muscle and constriction of intestinal smooth muscle. May target bradykinin receptors (BDKRB). This Bombina orientalis (Oriental fire-bellied toad) protein is Kininogen-1.